Consider the following 1570-residue polypeptide: Mediator of RNA polymerase II transcription subunit 1 (1570 aa).

2 consecutive short sequence motifs (LXXLL motif) follow at residues 585-589 (LTSLL) and 626-630 (LMNLL). 3 disordered regions span residues 592–687 (TNNT…TEDD), 771–880 (SKLS…FKDF), and 922–1561 (SKTL…MDDD). Basic and acidic residues predominate over residues 675-687 (TGAEKMKNQTEDD). 3 stretches are compositionally biased toward polar residues: residues 788 to 801 (RDSSSSGHSQSTLF), 832 to 861 (GSPNSDSPNTFFNSVDFNPDLLNSQSQSGF), and 931 to 942 (QETQSRSQSPLL). Positions 946 to 958 (LGKDRPQKQKVKE) are enriched in basic and acidic residues. Over residues 961-970 (NGGGAGGGLS) the composition is skewed to gly residues. Low complexity-rich tracts occupy residues 1022–1035 (PTSTGGSKSPGTSG), 1066–1082 (SSHGQYSSSGSSSSSSS), 1089–1113 (SSLSSSASGKIKSNKSDGSSGMKIG), 1121–1140 (SGQSGQSSSQSKNSSQSMGK), and 1152–1161 (SSNVSNSSGS). Polar residues predominate over residues 1173–1190 (MNPSLSKPNISPSHSRPS). A compositionally biased stretch (gly residues) spans 1217–1228 (GSGGQHLSGGGS). A compositionally biased stretch (low complexity) spans 1229–1271 (NSTTKSSSGLVSSGSLSQKPNSSSSSSSSSSSSSSSSSSSSSS). A compositionally biased stretch (polar residues) spans 1276 to 1287 (VSQNLHGNSKGK). The segment covering 1308–1328 (VGTGGPGSEDPMDGGGGGGST) has biased composition (gly residues). The segment covering 1347–1359 (PTKREKSEKDKSK) has biased composition (basic and acidic residues). Composition is skewed to polar residues over residues 1418 to 1433 (SQMQKNYGSPLISGST) and 1441 to 1455 (PSHNKSPAYTPQALD). Over residues 1459–1469 (ESGSSSIAEKS) the composition is skewed to low complexity. Residues 1494–1503 (KHKKHKKEKK) show a composition bias toward basic residues. Residues 1504 to 1516 (RLKDKDRDREKKK) are compositionally biased toward basic and acidic residues. Residues 1536 to 1546 (MAMSGGSMMSS) show a composition bias toward low complexity.

It belongs to the Mediator complex subunit 1 family. Component of the Mediator complex.

It localises to the nucleus. In terms of biological role, component of the Mediator complex, a coactivator involved in the regulated transcription of nearly all RNA polymerase II-dependent genes. Mediator functions as a bridge to convey information from gene-specific regulatory proteins to the basal RNA polymerase II transcription machinery. Mediator is recruited to promoters by direct interactions with regulatory proteins and serves as a scaffold for the assembly of a functional preinitiation complex with RNA polymerase II and the general transcription factors. This chain is Mediator of RNA polymerase II transcription subunit 1 (med1), found in Xenopus laevis (African clawed frog).